The sequence spans 214 residues: Holliday junction branch migration complex subunit RuvA (214 aa).

Residues 1-63 (MISFLRGPVA…EDSMTLYGFA (63 aa)) form a domain I region. The tract at residues 64–139 (DPDEREVFEI…KLVPHGTVNG (76 aa)) is domain II. Residues 139–143 (GAPAS) are flexible linker. A domain III region spans residues 144-214 (PSAQWKPQVV…SAGRQVTARG (71 aa)).

This sequence belongs to the RuvA family. In terms of assembly, homotetramer. Forms an RuvA(8)-RuvB(12)-Holliday junction (HJ) complex. HJ DNA is sandwiched between 2 RuvA tetramers; dsDNA enters through RuvA and exits via RuvB. An RuvB hexamer assembles on each DNA strand where it exits the tetramer. Each RuvB hexamer is contacted by two RuvA subunits (via domain III) on 2 adjacent RuvB subunits; this complex drives branch migration. In the full resolvosome a probable DNA-RuvA(4)-RuvB(12)-RuvC(2) complex forms which resolves the HJ.

It is found in the cytoplasm. Its function is as follows. The RuvA-RuvB-RuvC complex processes Holliday junction (HJ) DNA during genetic recombination and DNA repair, while the RuvA-RuvB complex plays an important role in the rescue of blocked DNA replication forks via replication fork reversal (RFR). RuvA specifically binds to HJ cruciform DNA, conferring on it an open structure. The RuvB hexamer acts as an ATP-dependent pump, pulling dsDNA into and through the RuvAB complex. HJ branch migration allows RuvC to scan DNA until it finds its consensus sequence, where it cleaves and resolves the cruciform DNA. The polypeptide is Holliday junction branch migration complex subunit RuvA (Renibacterium salmoninarum (strain ATCC 33209 / DSM 20767 / JCM 11484 / NBRC 15589 / NCIMB 2235)).